The sequence spans 199 residues: Protein MM_0484 (199 aa).

Residues 5-196 (TEGRAAVKLA…EKEPDGEVIE (192 aa)) enclose the AMMECR1 domain.

This is Protein MM_0484 from Methanosarcina mazei (strain ATCC BAA-159 / DSM 3647 / Goe1 / Go1 / JCM 11833 / OCM 88) (Methanosarcina frisia).